Consider the following 688-residue polypeptide: Pentatricopeptide repeat-containing protein At3g18020 (688 aa).

PPR repeat units follow at residues 53–88 (DRAYWRRRIHSICAVRRNPDEALRILDGLCLRGYRP), 89–123 (DSLNLSSVIHSLCDAGRFDEAHRRFLLFLASGFIP), 124–158 (DERTCNVIIARLLYSRSPVSTLGVIHRLIGFKKEF), 161–195 (SLTNYNRLMNQLCTIYRVIDAHKLVFDMRNRGHLP), 196–230 (DVVTFTTLIGGYCEIRELEVAHKVFDEMRVCGIRP), 231–261 (NSLTLSVLIGGFLKMRDVETGRKLMKELWEY), 271–305 (KAAAFANLVDSMCREGYFNDIFEIAENMSLCESVN), 306–340 (VEFAYGHMIDSLCRYRRNHGAARIVYIMKSKGLKP), 341–375 (RRTSYNAIIHGLCKDGGCMRAYQLLEEGSEFEFFP), 376–406 (SEYTYKLLMESLCKELDTGKARNVLELMLRK), 411–445 (RTRIYNIYLRGLCVMDNPTEILNVLVSMLQGDCRP), 446–480 (DEYTLNTVINGLCKMGRVDDAMKVLDDMMTGKFCA), 482–517 (DAVTLNTVMCGLLAQGRAEEALDVLNRVMPENKIKP), 518–552 (GVVAYNAVIRGLFKLHKGDEAMSVFGQLEKASVTA), 553–583 (DSTTYAIIIDGLCVTNKVDMAKKFWDDVIWP), 588–622 (DAFVYAAFLKGLCQSGYLSDACHFLYDLADSGAIP), and 623–657 (NVVCYNTVIAECSRSGLKREAYQILEEMRKNGQAP).

The protein belongs to the PPR family. P subfamily.

In Arabidopsis thaliana (Mouse-ear cress), this protein is Pentatricopeptide repeat-containing protein At3g18020.